A 391-amino-acid chain; its full sequence is Deoxyguanosinetriphosphate triphosphohydrolase-like protein (391 aa).

Positions 62–198 constitute an HD domain; the sequence is RLTHSLEVST…ASLADDISYI (137 aa).

It belongs to the dGTPase family. Type 2 subfamily.

This is Deoxyguanosinetriphosphate triphosphohydrolase-like protein from Rickettsia akari (strain Hartford).